The following is a 153-amino-acid chain: Aspartate carbamoyltransferase regulatory chain (153 aa).

Zn(2+) contacts are provided by Cys109, Cys114, Cys138, and Cys141.

The protein belongs to the PyrI family. As to quaternary structure, contains catalytic and regulatory chains. Zn(2+) serves as cofactor.

In terms of biological role, involved in allosteric regulation of aspartate carbamoyltransferase. The protein is Aspartate carbamoyltransferase regulatory chain of Salmonella paratyphi A (strain ATCC 9150 / SARB42).